Here is a 1488-residue protein sequence, read N- to C-terminus: Chromosome partition protein MukB (1488 aa).

34-41 is a binding site for ATP; sequence GGNGAGKS. Coiled coils occupy residues 326–418, 444–472, and 509–602; these read LEAD…QYNQ, LDTFQAKEQEATEKLLSLEQKMSVAQTAH, and RHLA…QRAP. Residues 666–783 form a flexible hinge region; it reads PGGAEDQRLN…SLPIFGRAAR (118 aa). 3 coiled-coil regions span residues 835–923, 977–1116, and 1209–1265; these read EAEI…AKLE, EMLS…AKAG, and VEAI…LQSV. A disordered region spans residues 1049–1074; it reads ADSGAEERARQRRDELHAQLSNNRSR. Positions 1051-1065 are enriched in basic and acidic residues; it reads SGAEERARQRRDELH.

It belongs to the SMC family. MukB subfamily. In terms of assembly, homodimerization via its hinge domain. Binds to DNA via its C-terminal region. Interacts, and probably forms a ternary complex, with MukE and MukF via its C-terminal region. The complex formation is stimulated by calcium or magnesium. Interacts with tubulin-related protein FtsZ.

It is found in the cytoplasm. Its subcellular location is the nucleoid. Its function is as follows. Plays a central role in chromosome condensation, segregation and cell cycle progression. Functions as a homodimer, which is essential for chromosome partition. Involved in negative DNA supercoiling in vivo, and by this means organize and compact chromosomes. May achieve or facilitate chromosome segregation by condensation DNA from both sides of a centrally located replisome during cell division. The sequence is that of Chromosome partition protein MukB from Salmonella typhimurium (strain LT2 / SGSC1412 / ATCC 700720).